A 367-amino-acid polypeptide reads, in one-letter code: DNA replication and repair protein RecF (367 aa).

Residue 30–37 (GANGSGKT) coordinates ATP.

The protein belongs to the RecF family.

The protein resides in the cytoplasm. Its function is as follows. The RecF protein is involved in DNA metabolism; it is required for DNA replication and normal SOS inducibility. RecF binds preferentially to single-stranded, linear DNA. It also seems to bind ATP. In Pseudomonas entomophila (strain L48), this protein is DNA replication and repair protein RecF.